Reading from the N-terminus, the 189-residue chain is 3-hydroxyanthranilate 3,4-dioxygenase (189 aa).

An O2-binding site is contributed by arginine 49. Fe cation contacts are provided by histidine 53, glutamate 59, and histidine 97. Glutamate 59 lines the substrate pocket. Arginine 101 and glutamate 112 together coordinate substrate. Cysteine 127, cysteine 130, cysteine 165, and cysteine 168 together coordinate Fe cation.

This sequence belongs to the 3-HAO family. As to quaternary structure, homodimer. Fe(2+) is required as a cofactor.

The catalysed reaction is 3-hydroxyanthranilate + O2 = (2Z,4Z)-2-amino-3-carboxymuconate 6-semialdehyde. It functions in the pathway cofactor biosynthesis; NAD(+) biosynthesis; quinolinate from L-kynurenine: step 3/3. Functionally, catalyzes the oxidative ring opening of 3-hydroxyanthranilate to 2-amino-3-carboxymuconate semialdehyde, which spontaneously cyclizes to quinolinate. The chain is 3-hydroxyanthranilate 3,4-dioxygenase from Cupriavidus pinatubonensis (strain JMP 134 / LMG 1197) (Cupriavidus necator (strain JMP 134)).